The following is a 139-amino-acid chain: Aspartate 1-decarboxylase (139 aa).

Catalysis depends on S25, which acts as the Schiff-base intermediate with substrate; via pyruvic acid. The residue at position 25 (S25) is a Pyruvic acid (Ser). T57 contributes to the substrate binding site. Residue Y58 is the Proton donor of the active site. Residue 73-75 (GAA) participates in substrate binding. Residues 116 to 139 (ELGEDPAHAPAGSGLKDPRHPEGE) form a disordered region.

Belongs to the PanD family. In terms of assembly, heterooctamer of four alpha and four beta subunits. Requires pyruvate as cofactor. In terms of processing, is synthesized initially as an inactive proenzyme, which is activated by self-cleavage at a specific serine bond to produce a beta-subunit with a hydroxyl group at its C-terminus and an alpha-subunit with a pyruvoyl group at its N-terminus.

It localises to the cytoplasm. It carries out the reaction L-aspartate + H(+) = beta-alanine + CO2. The protein operates within cofactor biosynthesis; (R)-pantothenate biosynthesis; beta-alanine from L-aspartate: step 1/1. In terms of biological role, catalyzes the pyruvoyl-dependent decarboxylation of aspartate to produce beta-alanine. In Corynebacterium urealyticum (strain ATCC 43042 / DSM 7109), this protein is Aspartate 1-decarboxylase.